Here is a 135-residue protein sequence, read N- to C-terminus: Large ribosomal subunit protein mL41 (135 aa).

The N-terminal 13 residues, 1–13, are a transit peptide targeting the mitochondrion; it reads MGVLSALARGFVR.

Belongs to the mitochondrion-specific ribosomal protein mL41 family. As to quaternary structure, component of the mitochondrial ribosome large subunit (39S) which comprises a 16S rRNA and about 50 distinct proteins.

Its subcellular location is the mitochondrion. Functionally, component of the mitochondrial ribosome large subunit. Also involved in apoptosis and cell cycle. The polypeptide is Large ribosomal subunit protein mL41 (mrpl41) (Danio rerio (Zebrafish)).